A 131-amino-acid chain; its full sequence is Interleukin-13 (131 aa).

The signal sequence occupies residues 1–18 (MALWVTAVLALACLGGLA). Residues N42, N52, and N75 are each glycosylated (N-linked (GlcNAc...) asparagine). Intrachain disulfides connect C51-C79 and C67-C93.

The protein belongs to the IL-4/IL-13 family. Interacts with IL13RA2.

It localises to the secreted. Cytokine that plays important roles in allergic inflammation and immune response to parasite infection. Synergizes with IL2 in regulating interferon-gamma synthesis. Stimulates B-cell proliferation, and activation of eosinophils, basophils, and mast cells. Plays an important role in controlling IL33 activity by modulating the production of transmembrane and soluble forms of interleukin-1 receptor-like 1/IL1RL1. Displays the capacity to antagonize Th1-driven proinflammatory immune response and downregulates synthesis of many proinflammatory cytokines including IL1, IL6, IL10, IL12 and TNF-alpha through a mechanism that partially involves suppression of NF-kappa-B. Also functions on nonhematopoietic cells, including endothelial cells where it induces vascular cell adhesion protein 1/VCAM1, which is important in the recruitment of eosinophils. Exerts its biological effects through its receptors which comprises the IL4R chain and the IL13RA1 chain, to activate JAK1 and TYK2, leading to the activation of STAT6. Aside from IL13RA1, another receptor IL13RA2 acts as a high affinity decoy for IL13 and mediates internalization and depletion of extracellular IL13. The sequence is that of Interleukin-13 (Il13) from Mus musculus (Mouse).